The following is a 354-amino-acid chain: tRNA N6-adenosine threonylcarbamoyltransferase (354 aa).

His-115 and His-119 together coordinate Fe cation. Substrate is bound by residues 138–142 (LVSGG), Asp-171, Gly-184, and Asn-276. Asp-304 provides a ligand contact to Fe cation.

Belongs to the KAE1 / TsaD family. Fe(2+) is required as a cofactor.

Its subcellular location is the cytoplasm. It catalyses the reaction L-threonylcarbamoyladenylate + adenosine(37) in tRNA = N(6)-L-threonylcarbamoyladenosine(37) in tRNA + AMP + H(+). Required for the formation of a threonylcarbamoyl group on adenosine at position 37 (t(6)A37) in tRNAs that read codons beginning with adenine. Is involved in the transfer of the threonylcarbamoyl moiety of threonylcarbamoyl-AMP (TC-AMP) to the N6 group of A37, together with TsaE and TsaB. TsaD likely plays a direct catalytic role in this reaction. This is tRNA N6-adenosine threonylcarbamoyltransferase from Xanthomonas oryzae pv. oryzae (strain MAFF 311018).